A 312-amino-acid polypeptide reads, in one-letter code: tRNA pseudouridine synthase B (312 aa).

The Nucleophile role is filled by Asp46. Residues Tyr74, Tyr177, and Leu198 each coordinate substrate.

This sequence belongs to the pseudouridine synthase TruB family. Type 1 subfamily.

It carries out the reaction uridine(55) in tRNA = pseudouridine(55) in tRNA. Its function is as follows. Responsible for synthesis of pseudouridine from uracil-55 in the psi GC loop of transfer RNAs. The polypeptide is tRNA pseudouridine synthase B (Buchnera aphidicola subsp. Schizaphis graminum (strain Sg)).